The sequence spans 514 residues: Embryonic protein UVS.2 (514 aa).

The N-terminal stretch at methionine 1 to serine 19 is a signal peptide. One can recognise a Peptidase M12A domain in the interval serine 90–asparagine 286. A glycan (N-linked (GlcNAc...) asparagine) is linked at asparagine 112. Intrachain disulfides connect cysteine 137–cysteine 285, cysteine 158–cysteine 178, cysteine 288–cysteine 314, cysteine 340–cysteine 363, cysteine 402–cysteine 428, and cysteine 455–cysteine 475. Histidine 186 contributes to the Zn(2+) binding site. Residue glutamate 187 is part of the active site. Residues histidine 190 and histidine 196 each coordinate Zn(2+). Asparagine 199 is a glycosylation site (N-linked (GlcNAc...) asparagine). 2 consecutive CUB domains span residues cysteine 288–isoleucine 400 and cysteine 402–valine 513. Asparagine 421, asparagine 427, and asparagine 464 each carry an N-linked (GlcNAc...) asparagine glycan.

The cofactor is Zn(2+).

The polypeptide is Embryonic protein UVS.2 (Xenopus laevis (African clawed frog)).